The sequence spans 312 residues: Ribonuclease HIII (312 aa).

One can recognise an RNase H type-2 domain in the interval 95–311 (FNCIGSDEAG…REKAQKILKP (217 aa)). The a divalent metal cation site is built by Asp101, Glu102, and Asp206.

It belongs to the RNase HII family. RnhC subfamily. The cofactor is Mn(2+). It depends on Mg(2+) as a cofactor.

It is found in the cytoplasm. The catalysed reaction is Endonucleolytic cleavage to 5'-phosphomonoester.. Endonuclease that specifically degrades the RNA of RNA-DNA hybrids. This chain is Ribonuclease HIII, found in Staphylococcus aureus (strain USA300).